Here is a 283-residue protein sequence, read N- to C-terminus: Putative ABC transporter ATP-binding protein MA_4342 (283 aa).

The 236-residue stretch at 3-238 (IILENVSFFY…KNVPLPPVTS (236 aa)) folds into the ABC transporter domain. An ATP-binding site is contributed by 40–47 (GEKGAGKS).

Belongs to the ABC transporter superfamily.

The protein localises to the cell membrane. In terms of biological role, probably part of an ABC transporter complex. Responsible for energy coupling to the transport system. This Methanosarcina acetivorans (strain ATCC 35395 / DSM 2834 / JCM 12185 / C2A) protein is Putative ABC transporter ATP-binding protein MA_4342.